Consider the following 349-residue polypeptide: Isopentenyl-diphosphate delta-isomerase (349 aa).

9 to 10 (RK) is a binding site for substrate. Residues 65-67 (AMT), S95, and N124 contribute to the FMN site. A substrate-binding site is contributed by 95–97 (STH). Residue Q154 coordinates substrate. A Mg(2+)-binding site is contributed by E155. Residues K186, S211, T216, 262–264 (GLR), and 283–284 (SR) each bind FMN.

The protein belongs to the IPP isomerase type 2 family. In terms of assembly, homooctamer. Dimer of tetramers. FMN serves as cofactor. NADPH is required as a cofactor. It depends on Mg(2+) as a cofactor.

It localises to the cytoplasm. The enzyme catalyses isopentenyl diphosphate = dimethylallyl diphosphate. Involved in the biosynthesis of isoprenoids. Catalyzes the 1,3-allylic rearrangement of the homoallylic substrate isopentenyl (IPP) to its allylic isomer, dimethylallyl diphosphate (DMAPP). The sequence is that of Isopentenyl-diphosphate delta-isomerase from Staphylococcus aureus (strain N315).